Here is a 316-residue protein sequence, read N- to C-terminus: tRNA dimethylallyltransferase (316 aa).

ATP is bound at residue 17–24 (GPTASGKT). 19-24 (TASGKT) is a substrate binding site. 4 interaction with substrate tRNA regions span residues 42-45 (DSAL), 166-170 (QRLSR), 247-252 (RCVGYR), and 280-287 (KRQITWLR).

Belongs to the IPP transferase family. In terms of assembly, monomer. Requires Mg(2+) as cofactor.

The catalysed reaction is adenosine(37) in tRNA + dimethylallyl diphosphate = N(6)-dimethylallyladenosine(37) in tRNA + diphosphate. Catalyzes the transfer of a dimethylallyl group onto the adenine at position 37 in tRNAs that read codons beginning with uridine, leading to the formation of N6-(dimethylallyl)adenosine (i(6)A). This chain is tRNA dimethylallyltransferase, found in Escherichia coli O127:H6 (strain E2348/69 / EPEC).